A 265-amino-acid polypeptide reads, in one-letter code: Thiazole synthase (265 aa).

Catalysis depends on K106, which acts as the Schiff-base intermediate with DXP. 1-deoxy-D-xylulose 5-phosphate-binding positions include G167, 193 to 194 (AG), and 215 to 216 (NS).

The protein belongs to the ThiG family. Homotetramer. Forms heterodimers with either ThiH or ThiS.

Its subcellular location is the cytoplasm. The catalysed reaction is [ThiS sulfur-carrier protein]-C-terminal-Gly-aminoethanethioate + 2-iminoacetate + 1-deoxy-D-xylulose 5-phosphate = [ThiS sulfur-carrier protein]-C-terminal Gly-Gly + 2-[(2R,5Z)-2-carboxy-4-methylthiazol-5(2H)-ylidene]ethyl phosphate + 2 H2O + H(+). It participates in cofactor biosynthesis; thiamine diphosphate biosynthesis. In terms of biological role, catalyzes the rearrangement of 1-deoxy-D-xylulose 5-phosphate (DXP) to produce the thiazole phosphate moiety of thiamine. Sulfur is provided by the thiocarboxylate moiety of the carrier protein ThiS. In vitro, sulfur can be provided by H(2)S. In Prochlorococcus marinus subsp. pastoris (strain CCMP1986 / NIES-2087 / MED4), this protein is Thiazole synthase.